Here is a 53-residue protein sequence, read N- to C-terminus: Chlorophyll a-b binding protein 1, chloroplastic (53 aa).

Chlorophyll b is bound at residue F18. Chlorophyll a is bound by residues E48 and H51. Chlorophyll b is bound at residue R53.

It belongs to the light-harvesting chlorophyll a/b-binding (LHC) protein family. As to quaternary structure, the LHC complex consists of chlorophyll a-b binding proteins. Requires Binds at least 14 chlorophylls (8 Chl-a and 6 Chl-b) and carotenoids such as lutein and neoxanthin. as cofactor. In terms of processing, photoregulated by reversible phosphorylation of its threonine residues.

It is found in the plastid. The protein resides in the chloroplast thylakoid membrane. The light-harvesting complex (LHC) functions as a light receptor, it captures and delivers excitation energy to photosystems with which it is closely associated. This chain is Chlorophyll a-b binding protein 1, chloroplastic, found in Populus euphratica (Euphrates poplar).